Consider the following 262-residue polypeptide: Nurim (262 aa).

Topologically, residues 1–4 (MAPA) are nuclear. Residues 5–28 (LLLVPAALASFILAFGTGVEFVRF) form a helical membrane-spanning segment. At 29-58 (TSLRPLLGGIPESGGPDARQGWLAALQDQS) the chain is on the perinuclear space side. A helical membrane pass occupies residues 59–80 (ILVPLAWDLGLLLLFVGQHSLM). Residues 81–97 (ATETVKAWMSRYFGVLQ) are Nuclear-facing. Residues 98–114 (RSLYVACTALALQLVMR) form a helical membrane-spanning segment. Residues 115–133 (YWEPVPRGPVLWEAQAEPW) are Perinuclear space-facing. The helical transmembrane segment at 134–164 (ATWVPLLCFVLHVISWLLIFSILLVFDYAEL) threads the bilayer. Topologically, residues 165-191 (MGLKQVYYHVLGLGEPLALKSPRALRL) are nuclear. A helical transmembrane segment spans residues 192 to 210 (FSHLRHPVCVELLTVLWVV). Residues 211–216 (PTLGTD) lie on the Perinuclear space side of the membrane. Residues 217–234 (RLLLALLLTLYLGLAHGL) form a helical membrane-spanning segment. Residues 235 to 262 (DQQDLRYLRAQLQRKLHLLSRPQDGEAE) lie on the Nuclear side of the membrane.

The protein belongs to the nurim family.

It localises to the nucleus inner membrane. The protein is Nurim (NRM) of Sus scrofa (Pig).